We begin with the raw amino-acid sequence, 851 residues long: Venom phosphodiesterase (851 aa).

The signal sequence occupies residues 1–23 (MIQQKVLFISLVAVALGLGLGLG). SMB domains follow at residues 30–73 (PQVS…VLPT) and 74–118 (QSWS…GETS). 16 disulfides stabilise this stretch: Cys-34–Cys-38, Cys-34–Cys-51, Cys-38–Cys-69, Cys-49–Cys-51, Cys-49–Cys-62, Cys-55–Cys-61, Cys-62–Cys-69, Cys-78–Cys-83, Cys-78–Cys-95, Cys-83–Cys-113, Cys-93–Cys-95, Cys-93–Cys-106, Cys-99–Cys-105, Cys-106–Cys-113, Cys-124–Cys-170, and Cys-132–Cys-344. Asn-39 carries an N-linked (GlcNAc...) asparagine glycan. A Cell attachment site motif is present at residues 58-60 (RQA). Positions 147 and 185 each coordinate a divalent metal cation. The AMP-threonine intermediate role is filled by Thr-185. Asn-216, Asn-259, and Asn-270 each carry an N-linked (GlcNAc...) asparagine glycan. Residue Lys-271 participates in AMP binding. Positions 305, 309, 352, and 353 each coordinate a divalent metal cation. AMP is bound at residue His-309. Cystine bridges form between Cys-360-Cys-457, Cys-408-Cys-793, Cys-541-Cys-599, Cys-554-Cys-654, Cys-556-Cys-639, and Cys-762-Cys-772. N-linked (GlcNAc...) asparagine glycosylation is present at Asn-405. Residue His-462 coordinates a divalent metal cation. N-linked (GlcNAc...) asparagine glycosylation is found at Asn-512, Asn-594, and Asn-745.

Belongs to the nucleotide pyrophosphatase/phosphodiesterase family. In terms of assembly, monomer cleaved in two subunits; disulfide-linked. Is synthesized as a single-chain protein and is subsequently cleaved to form a two-subunit protein held together with disulfide bonds. Requires a divalent metal cation as cofactor. As to expression, expressed by venom gland.

It is found in the secreted. It catalyses the reaction ADP + H2O = AMP + phosphate + H(+). Its function is as follows. Hydrolyzes ADP with high activity. Shows weak or no activity on 5'-AMP, 5'-GMP, 3'-AMP, ATP, cAMP, and cGMP. Is devoid of monophosphatase and proteinase activities. Dose-dependently inhibits platelet aggregation induced by ADP (IC(50)=0.99 uM) and collagen (IC(50)=1.4 uM). The sequence is that of Venom phosphodiesterase from Macrovipera lebetinus (Levantine viper).